The chain runs to 801 residues: Triacylglycerol lipase SDP1L (801 aa).

A glycan (N-linked (GlcNAc...) asparagine) is linked at N130. A run of 2 helical transmembrane segments spans residues 232–249 (ALLL…LGVV) and 261–277 (IIAG…VVGT). A PNPLA domain is found at 233-436 (LLLSGGASLG…EMDLPMIQLK (204 aa)). Positions 264–268 (GSSVG) match the GXSXG motif. Residue S266 is the Nucleophile of the active site. 2 N-linked (GlcNAc...) asparagine glycosylation sites follow: N328 and N332. Catalysis depends on D423, which acts as the Proton acceptor. Residues N605, N620, N649, N653, N708, and N759 are each glycosylated (N-linked (GlcNAc...) asparagine). Residues 648–675 (SNRTSNLSHTYDAGSECDSPEAEDWTRS) are disordered. The interval 750–801 (MNSEPEDSQNESEIPETPESVQLDSPEKDIIDGESSASEDGDAQANLIHDHE) is disordered. The span at 753–765 (EPEDSQNESEIPE) shows a compositional bias: acidic residues.

Highly expressed in mature pollen.

It localises to the lipid droplet. The protein resides in the membrane. It carries out the reaction a triacylglycerol + H2O = a diacylglycerol + a fatty acid + H(+). Its function is as follows. May be involved in the release of fatty acids from the oil body in germinating seedlings. Can hydrolyze triacylglycerols in vitro. This chain is Triacylglycerol lipase SDP1L, found in Arabidopsis thaliana (Mouse-ear cress).